We begin with the raw amino-acid sequence, 188 residues long: NADH-quinone oxidoreductase subunit I (188 aa).

2 consecutive 4Fe-4S ferredoxin-type domains span residues 44–74 and 90–119; these read LNRYADGLEKCIGCELCAWACPADAIYVEGA and QVYQINYLRCIGCGLCIEACPTRALTMTNE. Residues C54, C57, C60, C64, C99, C102, C105, and C109 each coordinate [4Fe-4S] cluster. The tract at residues 167–188 is disordered; that stretch reads TGGAAAAAQDESEVDDTAGDRP. Residues 176–188 are compositionally biased toward acidic residues; that stretch reads DESEVDDTAGDRP.

It belongs to the complex I 23 kDa subunit family. As to quaternary structure, NDH-1 is composed of 14 different subunits. Subunits NuoA, H, J, K, L, M, N constitute the membrane sector of the complex. Requires [4Fe-4S] cluster as cofactor.

It localises to the cell membrane. It carries out the reaction a quinone + NADH + 5 H(+)(in) = a quinol + NAD(+) + 4 H(+)(out). NDH-1 shuttles electrons from NADH, via FMN and iron-sulfur (Fe-S) centers, to quinones in the respiratory chain. The immediate electron acceptor for the enzyme in this species is believed to be ubiquinone. Couples the redox reaction to proton translocation (for every two electrons transferred, four hydrogen ions are translocated across the cytoplasmic membrane), and thus conserves the redox energy in a proton gradient. This Rhodococcus jostii (strain RHA1) protein is NADH-quinone oxidoreductase subunit I.